Here is a 330-residue protein sequence, read N- to C-terminus: Ketol-acid reductoisomerase (NADP(+)) (330 aa).

One can recognise a KARI N-terminal Rossmann domain in the interval 1-181 (MNAYYEQDAD…GGTKAGVIET (181 aa)). NADP(+) contacts are provided by residues 24 to 27 (FGSQ), arginine 47, serine 50, serine 52, and 82 to 85 (DQYQ). Histidine 107 is a catalytic residue. Glycine 133 lines the NADP(+) pocket. The KARI C-terminal knotted domain maps to 182–327 (TFKNETETDL…AKLRDMMSWL (146 aa)). Mg(2+) contacts are provided by aspartate 190, glutamate 194, glutamate 226, and glutamate 230. Serine 251 is a binding site for substrate.

Belongs to the ketol-acid reductoisomerase family. Mg(2+) serves as cofactor.

The catalysed reaction is (2R)-2,3-dihydroxy-3-methylbutanoate + NADP(+) = (2S)-2-acetolactate + NADPH + H(+). The enzyme catalyses (2R,3R)-2,3-dihydroxy-3-methylpentanoate + NADP(+) = (S)-2-ethyl-2-hydroxy-3-oxobutanoate + NADPH + H(+). The protein operates within amino-acid biosynthesis; L-isoleucine biosynthesis; L-isoleucine from 2-oxobutanoate: step 2/4. It functions in the pathway amino-acid biosynthesis; L-valine biosynthesis; L-valine from pyruvate: step 2/4. Its function is as follows. Involved in the biosynthesis of branched-chain amino acids (BCAA). Catalyzes an alkyl-migration followed by a ketol-acid reduction of (S)-2-acetolactate (S2AL) to yield (R)-2,3-dihydroxy-isovalerate. In the isomerase reaction, S2AL is rearranged via a Mg-dependent methyl migration to produce 3-hydroxy-3-methyl-2-ketobutyrate (HMKB). In the reductase reaction, this 2-ketoacid undergoes a metal-dependent reduction by NADPH to yield (R)-2,3-dihydroxy-isovalerate. The polypeptide is Ketol-acid reductoisomerase (NADP(+)) (Chlorobium phaeobacteroides (strain BS1)).